A 311-amino-acid chain; its full sequence is Salutaridine reductase (311 aa).

NADP(+) is bound at residue 17-40 (VTGGNKGIGFEICKQLSSSGIMVV). Ser-180 lines the substrate pocket. Tyr-236 (proton acceptor) is an active-site residue.

This sequence belongs to the short-chain dehydrogenases/reductases (SDR) family.

The catalysed reaction is (7S)-salutaridinol + NADP(+) = salutaridine + NADPH + H(+). With respect to regulation, subject to substrate inhibition at salutaridine concentrations higher than 20 to 30 uM. Functionally, involved in biosynthesis of morphinan-type benzylisoquinoline alkaloids. Catalyzes the stereospecific conversion of salutaridine to salutaridinol. The chain is Salutaridine reductase from Papaver bracteatum (Great scarlet poppy).